Consider the following 412-residue polypeptide: Probable tRNA pseudouridine synthase D (412 aa).

Asp-97 functions as the Nucleophile in the catalytic mechanism. Residues Ala-167–Gln-370 enclose the TRUD domain.

This sequence belongs to the pseudouridine synthase TruD family.

It catalyses the reaction uridine(13) in tRNA = pseudouridine(13) in tRNA. Functionally, could be responsible for synthesis of pseudouridine from uracil-13 in transfer RNAs. This chain is Probable tRNA pseudouridine synthase D, found in Pyrobaculum neutrophilum (strain DSM 2338 / JCM 9278 / NBRC 100436 / V24Sta) (Thermoproteus neutrophilus).